We begin with the raw amino-acid sequence, 256 residues long: Pro-opiomelanocortin (256 aa).

Residues 1–26 form the signal peptide; sequence MPRSCYSRSGTLLLALLLQISMEVRG. Cysteines 28 and 50 form a disulfide. An O-linked (GalNAc...) threonine glycan is attached at Thr-71. Phe-87 is subject to Phenylalanine amide. Residues 88–120 are disordered; the sequence is GRGNSSGASQKREEEAAAADPGFHGDGVEPGLR. Asn-91 carries N-linked (GlcNAc...) asparagine glycosylation. The propeptide occupies 100–122; the sequence is EEEAAAADPGFHGDGVEPGLRED. N-acetylserine; in Corticotropin is present on Ser-125. Valine amide is present on Val-137. Ser-155 is modified (phosphoserine).

Belongs to the POMC family. In terms of processing, specific enzymatic cleavages at paired basic residues yield the different active peptides. ACTH and MSH are produced by the pituitary gland.

The protein resides in the secreted. ACTH stimulates the adrenal glands to release cortisol. Functionally, MSH (melanocyte-stimulating hormone) increases the pigmentation of skin by increasing melanin production in melanocytes. Its function is as follows. Beta-endorphin and Met-enkephalin are endogenous opiates. In terms of biological role, stimulates the adrenal glands to release cortisol. Anorexigenic peptide. Increases the pigmentation of skin by increasing melanin production in melanocytes. Functionally, increases the pigmentation of skin by increasing melanin production in melanocytes. Its function is as follows. Endogenous orexigenic opiate. In terms of biological role, endogenous opiate. The polypeptide is Pro-opiomelanocortin (POMC) (Cavia porcellus (Guinea pig)).